The primary structure comprises 642 residues: Nocturnin (642 aa).

A disordered region spans residues leucine 50–alanine 87. Residues glutamate 72 to alanine 87 show a composition bias toward basic and acidic residues. Glutamate 363 is a binding site for Mg(2+). Residues glutamate 363, asparagine 430, histidine 453–alanine 456, aspartate 491–asparagine 493, and histidine 600 contribute to the substrate site. A disordered region spans residues proline 611–glutamine 642.

Belongs to the CCR4/nocturin family. Associates to the CCR4-NOT complex composed of at least Pop2/Caf1-55, Ccr4, Not1, Rga/Not2, and Not3. The cofactor is Mg(2+). Expressed in the head, in the dorsal neurons DN3, a subgroup of clock neurons (at protein level). Ubiquitously expressed in both males and females.

The protein resides in the cytoplasm. The enzyme catalyses NADP(+) + H2O = phosphate + NAD(+). It catalyses the reaction NADPH + H2O = phosphate + NADH. Functionally, phosphatase which catalyzes the conversion of NADP(+) to NAD(+) and of NADPH to NADH. Shows a small preference for NADPH over NADP(+). Because of its association with the CCR4-NOT complex, has a role in mRNA deadenylation and decay. Required at the pupal stage for proper wing morphogenesis after eclosion. Doesn't have a role in light-mediated behavioral response. In terms of biological role, in dorsal neurons, contributes to the light-mediated behavioral response. This Drosophila melanogaster (Fruit fly) protein is Nocturnin.